The sequence spans 294 residues: MTKLKKVMISVIAATLLLLAGCGSSAVVKTDAGSVTQDELYEAMKTTYGNEVVQQLTFKKILEDKYTVTEKEVNAEYKKYEEQYGDSFESTLSSNNLTKTSFKENLEYNLLVQKATEANMNVSESKLKTYYKTWEPDITVRHILVDDEATAKEIQTKLKNGEKFTDLAKEYSTDTATSTNGGLLDPFGPGEMDETFEKAAYALENKDDVSGIVKSTYGYHLIQLVKKTEKGTYAKEKANVKAAYIESQLTTENMTAALKKELKAANIDIKDSDLKDAFADYTSTSSTSSTTTSN.

An N-terminal signal peptide occupies residues 1–21 (MTKLKKVMISVIAATLLLLAG). A lipid anchor (N-palmitoyl cysteine) is attached at C22. A lipid anchor (S-diacylglycerol cysteine) is attached at C22. Positions 135–226 (EPDITVRHIL…YGYHLIQLVK (92 aa)) constitute a PpiC domain.

The protein belongs to the PrsA family.

The protein resides in the cell membrane. The catalysed reaction is [protein]-peptidylproline (omega=180) = [protein]-peptidylproline (omega=0). In terms of biological role, plays a major role in protein secretion by helping the post-translocational extracellular folding of several secreted proteins. This Listeria monocytogenes serotype 4b (strain F2365) protein is Foldase protein PrsA 1.